Reading from the N-terminus, the 502-residue chain is Probable cytosol aminopeptidase (502 aa).

Residues Lys-269 and Asp-274 each contribute to the Mn(2+) site. Lys-281 is an active-site residue. Mn(2+)-binding residues include Asp-292, Asp-351, and Glu-353. Arg-355 is a catalytic residue.

This sequence belongs to the peptidase M17 family. Mn(2+) is required as a cofactor.

It is found in the cytoplasm. The catalysed reaction is Release of an N-terminal amino acid, Xaa-|-Yaa-, in which Xaa is preferably Leu, but may be other amino acids including Pro although not Arg or Lys, and Yaa may be Pro. Amino acid amides and methyl esters are also readily hydrolyzed, but rates on arylamides are exceedingly low.. The enzyme catalyses Release of an N-terminal amino acid, preferentially leucine, but not glutamic or aspartic acids.. Presumably involved in the processing and regular turnover of intracellular proteins. Catalyzes the removal of unsubstituted N-terminal amino acids from various peptides. In Shewanella denitrificans (strain OS217 / ATCC BAA-1090 / DSM 15013), this protein is Probable cytosol aminopeptidase.